We begin with the raw amino-acid sequence, 212 residues long: High frequency lysogenization protein HflD homolog (212 aa).

This sequence belongs to the HflD family.

The protein localises to the cytoplasm. Its subcellular location is the cell inner membrane. This is High frequency lysogenization protein HflD homolog from Pectobacterium carotovorum subsp. carotovorum (strain PC1).